We begin with the raw amino-acid sequence, 522 residues long: Peptide methionine sulfoxide reductase MsrA/MsrB (522 aa).

The 158-residue stretch at 17–174 folds into the Thioredoxin domain; it reads LALGACSPKI…ALALIRDPNA (158 aa). A disulfide bond links Cys68 and Cys71. The segment at 199–354 is peptide methionine sulfoxide reductase A; it reads RTIYLAGGCF…PNGYCHIDIR (156 aa). Cys207 is an active-site residue. The MsrB domain maps to 383 to 506; it reads DAELKRTLTE…NGASLKFIPL (124 aa). An intrachain disulfide couples Cys440 to Cys495. Cys495 acts as the Nucleophile in catalysis.

It in the N-terminal section; belongs to the thioredoxin family. In the central section; belongs to the MsrA Met sulfoxide reductase family. The protein in the C-terminal section; belongs to the MsrB Met sulfoxide reductase family.

It carries out the reaction L-methionyl-[protein] + [thioredoxin]-disulfide + H2O = L-methionyl-(S)-S-oxide-[protein] + [thioredoxin]-dithiol. It catalyses the reaction [thioredoxin]-disulfide + L-methionine + H2O = L-methionine (S)-S-oxide + [thioredoxin]-dithiol. The catalysed reaction is L-methionyl-[protein] + [thioredoxin]-disulfide + H2O = L-methionyl-(R)-S-oxide-[protein] + [thioredoxin]-dithiol. In terms of biological role, has an important function as a repair enzyme for proteins that have been inactivated by oxidation. Catalyzes the reversible oxidation-reduction of methionine sulfoxide in proteins to methionine. This Neisseria meningitidis serogroup A / serotype 4A (strain DSM 15465 / Z2491) protein is Peptide methionine sulfoxide reductase MsrA/MsrB (msrAB).